The primary structure comprises 330 residues: Free fatty acid receptor 2 (330 aa).

Residues 1 to 8 (MTPDWHSS) are Extracellular-facing. A helical membrane pass occupies residues 9 to 29 (LILTAYILIFLTGLPANLLAL). At 30-43 (RAFMGRVRQPQPAP) the chain is on the cytoplasmic side. A helical membrane pass occupies residues 44–64 (VHILLLNLTLADLLLLLLLPF). Topologically, residues 65 to 79 (RIVEAASNFRWYLPK) are extracellular. The chain crosses the membrane as a helical span at residues 80-100 (IVCALTGFGFYSSIYCSTWLL). Over 101–126 (AGISMERYLGVAFPVQYKLSRRPLYG) the chain is Cytoplasmic. A helical membrane pass occupies residues 127–147 (VIAALVAWIMSFGHCTIVIIV). Residues 148 to 184 (QYLNSTEQVGTENQITCYENFTQEQLDVVLPVRLELC) lie on the Extracellular side of the membrane. N151 and N167 each carry an N-linked (GlcNAc...) asparagine glycan. A helical transmembrane segment spans residues 185–205 (LVLFFVPMAVTIFCYWRFVWI). The Cytoplasmic portion of the chain corresponds to 206–219 (MLTQPHVGAQRRRR). Residues 220–240 (AVGLAVVTLLNFLVCFGPYNM) traverse the membrane as a helical segment. Residues 241–255 (SHLVGFYLRQSPSWR) lie on the Extracellular side of the membrane. A helical membrane pass occupies residues 256–276 (VEAVVFSSLNASLDPLLFYFS). Over 277-330 (SSVVRRAFGKGLLLIRNPASSMLGRGAKETVEGTKMDRGGSQAEGVQSSEFVTE) the chain is Cytoplasmic. Residues 306–330 (TVEGTKMDRGGSQAEGVQSSEFVTE) form a disordered region. Positions 320–330 (EGVQSSEFVTE) are enriched in polar residues.

Belongs to the G-protein coupled receptor 1 family. As to quaternary structure, interacts with FCN1 (via Fibrinogen C-terminal domain). Highly expressed in hematopoietic tissues, such as spleen and bone marrow, with highest levels in a subset of immune cells, including monocytes or neutrophils. Expressed in adipose tissues with high expression in differentiating adipocytes. Expressed by intestinal endocrine cells.

It is found in the cell membrane. In terms of biological role, g protein-coupled receptor that is activated by a major product of dietary fiber digestion, the short chain fatty acids (SCFAs), and that plays a role in the regulation of whole-body energy homeostasis and in intestinal immunity. In omnivorous mammals, the short chain fatty acids acetate, propionate and butyrate are produced primarily by the gut microbiome that metabolizes dietary fibers. SCFAs serve as a source of energy but also act as signaling molecules. That G protein-coupled receptor is probably coupled to the pertussis toxin-sensitive, G(i/o)-alpha family of G proteins but also to the Gq family. Its activation results in the formation of inositol 1,4,5-trisphosphate, the mobilization of intracellular calcium, the phosphorylation of the MAPK3/ERK1 and MAPK1/ERK2 kinases and the inhibition of intracellular cAMP accumulation. May play a role in glucose homeostasis by regulating the secretion of GLP-1, in response to short-chain fatty acids accumulating in the intestine. May also regulate the production of LEP/Leptin, a hormone acting on the central nervous system to inhibit food intake. Finally, may also regulate whole-body energy homeostasis through adipogenesis regulating both differentiation and lipid storage of adipocytes. In parallel to its role in energy homeostasis, may also mediate the activation of the inflammatory and immune responses by SCFA in the intestine, regulating the rapid production of chemokines and cytokines. May also play a role in the resolution of the inflammatory response and control chemotaxis in neutrophils. In addition to SCFAs, may also be activated by the extracellular lectin FCN1 in a process leading to activation of monocytes and inducing the secretion of interleukin-8/IL-8 in response to the presence of microbes. This is Free fatty acid receptor 2 (Ffar2) from Mus musculus (Mouse).